The primary structure comprises 275 residues: Homeobox-leucine zipper protein ATHB-17 (275 aa).

The segment at 95-143 is disordered; sequence SSPLSDEGSGGGRDQLRLDMNRLPSSEDGDDEEFSHDDGSAPPRKKLRL. Positions 136–195 form a DNA-binding region, homeobox; the sequence is PPRKKLRLTREQSRLLEDSFRQNHTLNPKQKEVLAKHLMLRPRQIEVWFQNRRARSKLKQ. Residues 203-224 are leucine-zipper; that stretch reads LKRWFGSLTEENHRLHREVEEL. A disordered region spans residues 252–275; sequence AASPSRAVVPVPAKKTFPPQERDR.

This sequence belongs to the HD-ZIP homeobox family. Class II subfamily.

It localises to the nucleus. Probable transcription factor. The sequence is that of Homeobox-leucine zipper protein ATHB-17 (ATHB-17) from Arabidopsis thaliana (Mouse-ear cress).